A 437-amino-acid chain; its full sequence is MNQFEPKFTLIDTVSNQSVVLEQKQINIYLCGPTVYNDLHLGNTRPLIVFDVLQRVLQAAQYKVQFVQNITDIDDKIIKIAQQQEISEAQLCKQQITAYKSLLKKLNILPIKHLQVTDKIDKMPGYIARLVKKGFAYVSPLGNTYFSVSQLPQYGILANRVVETIEDEATDKRNKLDFVLWKQTTAGVKWNSPWGWGRPGWHVECAFLIDYSFKDQLTIHGGGVDLKFPHHENENAMHMALYDKPLTQHWMHIGHLMFENQKMSKSLQNFLLAVDFLTIHDFRILRWLFYQKHYYHPLDLSQSLIEQACSDIKRIQKAVNVCRTWFVYSEQSAIPAPKQFEPVFKALLNNLNFANAITHIWKLVKQINHDVSKQNLSGLKEHLSHLEWALNILGIGFKSIHTKLNVQLIKKWASLRKNGQLDKADEVRQKLIKKGLL.

C31 is a binding site for Zn(2+). Residues 33–43 (PTVYNDLHLGN) carry the 'HIGH' region motif. C205, H230, and E234 together coordinate Zn(2+). The short motif at 262–266 (KMSKS) is the 'KMSKS' region element. K265 is an ATP binding site.

This sequence belongs to the class-I aminoacyl-tRNA synthetase family. As to quaternary structure, monomer. The cofactor is Zn(2+).

It is found in the cytoplasm. The catalysed reaction is tRNA(Cys) + L-cysteine + ATP = L-cysteinyl-tRNA(Cys) + AMP + diphosphate. In Mycoplasma pneumoniae (strain ATCC 29342 / M129 / Subtype 1) (Mycoplasmoides pneumoniae), this protein is Cysteine--tRNA ligase (cysS).